A 371-amino-acid chain; its full sequence is Cyanide hydratase (371 aa).

The CN hydrolase domain occupies 8-286 (YKAAAVQAEP…EGLMFVEIDL (279 aa)). Catalysis depends on E48, which acts as the Proton acceptor. K130 is a catalytic residue. The Nucleophile role is filled by C165. Residues 326–356 (DGGIGTYNTQDRVGLNRPLDAPKVDGPSGVS) are disordered.

Belongs to the carbon-nitrogen hydrolase superfamily. Nitrilase family. In terms of assembly, oligomer of dimers, forming left-handed helical fibers.

The enzyme catalyses formamide = hydrogen cyanide + H2O. Its function is as follows. Catalyzes the hydration of cyanide to formamide. Degradation of cyanide may be important for plant pathogenic fungi in infection of cyanogenic plants. Can also transform some nitriles like 2-cyanopyridine and fumaronitrile and has a minor activity with 4-cyanophenyl acetonitrile (4-CPA). The sequence is that of Cyanide hydratase from Botryotinia fuckeliana (strain T4) (Noble rot fungus).